A 290-amino-acid chain; its full sequence is Enoyl-CoA hydratase, mitochondrial (290 aa).

The N-terminal 29 residues, 1–29, are a transit peptide targeting the mitochondrion; the sequence is MAALRALLPRACNSLLSPVRCPEFRRFAS. Position 98-101 (98-101) interacts with substrate; sequence ADIK. Residues Lys-101 and Lys-115 each carry the N6-acetyllysine; alternate modification. N6-succinyllysine; alternate occurs at positions 101 and 115. A substrate-binding site is contributed by Gly-141. Lys-204 is subject to N6-succinyllysine. Lys-211 is modified (N6-acetyllysine).

Belongs to the enoyl-CoA hydratase/isomerase family. As to quaternary structure, homohexamer; dimer of trimers. In terms of tissue distribution, detected in liver (at protein level).

The protein resides in the mitochondrion matrix. It carries out the reaction a (3S)-3-hydroxyacyl-CoA = a (2E)-enoyl-CoA + H2O. It catalyses the reaction a (3E)-enoyl-CoA = a 4-saturated (2E)-enoyl-CoA. The catalysed reaction is (3E)-hexenoyl-CoA = (2E)-hexenoyl-CoA. The enzyme catalyses (3S)-3-hydroxybutanoyl-CoA = (2E)-butenoyl-CoA + H2O. It carries out the reaction 3-hydroxyisovaleryl-CoA = 3-methylbut-2-enoyl-CoA + H2O. It catalyses the reaction 3-hydroxypropanoyl-CoA = acryloyl-CoA + H2O. The catalysed reaction is 3-hydroxybutanoyl-CoA = (2E)-butenoyl-CoA + H2O. The enzyme catalyses 2-methylpropenoyl-CoA + H2O = (S)-3-hydroxyisobutanoyl-CoA. It carries out the reaction (3S)-hydroxyhexanoyl-CoA = (2E)-hexenoyl-CoA + H2O. It catalyses the reaction (3S)-hydroxydecanoyl-CoA = (2E)-decenoyl-CoA + H2O. It participates in lipid metabolism; fatty acid beta-oxidation. Functionally, converts unsaturated trans-2-enoyl-CoA species ((2E)-enoyl-CoA) to the corresponding 3(S)-3-hydroxyacyl-CoA species through addition of a water molecule to the double bond. Catalyzes the hydration of medium- and short-chained fatty enoyl-CoA thioesters from 4 carbons long (C4) up to C16. Has high substrate specificity for crotonyl-CoA ((2E)-butenoyl-CoA) and moderate specificity for acryloyl-CoA, 3-methylcrotonyl-CoA (3-methyl-(2E)-butenoyl-CoA) and methacrylyl-CoA ((2E)-2-methylpropenoyl-CoA). Can bind tiglyl-CoA (2-methylcrotonoyl-CoA), but hydrates only a small amount of this substrate. Plays a key role in the beta-oxidation spiral of short- and medium-chain fatty acid oxidation. At a lower rate than the hydratase reaction, catalyzes the isomerase reaction of trans-3-enoyl-CoA species (such as (3E)-hexenoyl-CoA) to trans-2-enoyl-CoA species (such as (2E)-hexenoyl-CoA), which are subsequently hydrated to 3(S)-3-hydroxyacyl-CoA species (such as (3S)-hydroxyhexanoyl-CoA). The protein is Enoyl-CoA hydratase, mitochondrial of Rattus norvegicus (Rat).